A 475-amino-acid chain; its full sequence is Flotillin-like protein 4 (475 aa).

Coiled-coil stretches lie at residues Glu235 to Ala255 and Gln305 to Glu325.

It belongs to the band 7/mec-2 family. Flotillin subfamily. As to expression, expressed in roots and nodules. Primarily expressed in vascular tissues. Upon induction of nodulation, expansion of expression in the root cortex in the region of elongating root hairs, which will eventually become colonized by bacteria. Expressed in the infection zone in nodules.

Its subcellular location is the membrane. It is found in the caveola. The protein localises to the cell membrane. Its function is as follows. May act as a scaffolding protein within caveolar membranes, functionally participating in formation of caveolae or caveolae-like vesicles. Required for normal infection threads initiation and elongation and nodulation. Probably involved in polar growth of the infection thread. The protein is Flotillin-like protein 4 (FLOT4) of Medicago truncatula (Barrel medic).